The chain runs to 291 residues: Trimeric intracellular cation channel type B (291 aa).

The Lumenal segment spans residues 1-15 (MESPWNELTLAFSRT). A helical membrane pass occupies residues 16–33 (SMFPFFDIAHYLVSVMAL). At 34–47 (KHQPGAAALAWKNP) the chain is on the cytoplasmic side. The helical transmembrane segment at 48-69 (LSSWFTAMLHCFGGGILSCVLL) threads the bilayer. Over 70–80 (AEPPLRFLANN) the chain is Lumenal. Residues 81 to 100 (TNILLASSIWYIAFFCPCDL) form a helical membrane-spanning segment. The Cytoplasmic portion of the chain corresponds to 101–103 (ISQ). The chain crosses the membrane as a helical span at residues 104–122 (AYSFLPVQLLAAGMKEVTR). Residues K118 and R122 each contribute to the a 1,2-diacyl-sn-glycero-3-phospho-(1D-myo-inositol-4,5-bisphosphate) site. Residues 123–138 (TWKIVGGVTHANSYYK) lie on the Lumenal side of the membrane. Residues 139-156 (NGWIVMIAVGWARGAGGS) form a helical membrane-spanning segment. The Cytoplasmic portion of the chain corresponds to 157–179 (IITNFEQLVKGCWKPEAEEWLKM). The chain crosses the membrane as a helical span at residues 180–196 (SYPAKVTLLGSVIFTFQ). Topologically, residues 197 to 207 (QTKYLAISKHN) are lumenal. A helical membrane pass occupies residues 208–225 (LMFLFTVFLVATKITMMI). Topologically, residues 226–291 (TKTALVPFAC…VKKKHSKKTE (66 aa)) are cytoplasmic. Residues 257–291 (KSETKSSFNGTGSSTSKPVANASDKVKKKHSKKTE) form a disordered region. Residues 261 to 274 (KSSFNGTGSSTSKP) are compositionally biased toward polar residues. S262 carries the phosphoserine modification. Over residues 282 to 291 (VKKKHSKKTE) the composition is skewed to basic residues.

Belongs to the TMEM38 family. In terms of assembly, homotrimer; conformation seems to be controled by binding to diacylglycerol (DAG).

Its subcellular location is the endoplasmic reticulum membrane. It catalyses the reaction K(+)(in) = K(+)(out). Channel activity is activated by increased cytosolic Ca(2+) levels and blocked by luminal high Ca(2+) levels. Its function is as follows. Intracellular monovalent cation channel required for maintenance of rapid intracellular calcium release. Acts as a potassium counter-ion channel that functions in synchronization with calcium release from intracellular stores. Activated by increased cytosolic Ca(2+) levels. This chain is Trimeric intracellular cation channel type B (TMEM38B), found in Bos taurus (Bovine).